The following is a 352-amino-acid chain: tRNA-specific 2-thiouridylase MnmA (352 aa).

Residues 9 to 16 (ALSGGVDS) and Met-35 contribute to the ATP site. The active-site Nucleophile is Cys-96. Cys-96 and Cys-192 form a disulfide bridge. Gly-120 is an ATP binding site. The interval 142–144 (KDQ) is interaction with tRNA. Residue Cys-192 is the Cysteine persulfide intermediate of the active site. The segment at 299–300 (RY) is interaction with tRNA.

Belongs to the MnmA/TRMU family.

The protein resides in the cytoplasm. The catalysed reaction is S-sulfanyl-L-cysteinyl-[protein] + uridine(34) in tRNA + AH2 + ATP = 2-thiouridine(34) in tRNA + L-cysteinyl-[protein] + A + AMP + diphosphate + H(+). Functionally, catalyzes the 2-thiolation of uridine at the wobble position (U34) of tRNA, leading to the formation of s(2)U34. This Acidithiobacillus ferrooxidans (strain ATCC 23270 / DSM 14882 / CIP 104768 / NCIMB 8455) (Ferrobacillus ferrooxidans (strain ATCC 23270)) protein is tRNA-specific 2-thiouridylase MnmA.